A 451-amino-acid chain; its full sequence is NADH-quinone oxidoreductase subunit D (451 aa).

Belongs to the complex I 49 kDa subunit family. In terms of assembly, NDH-1 is composed of 14 different subunits. Subunits NuoB, C, D, E, F, and G constitute the peripheral sector of the complex.

It is found in the cell membrane. The catalysed reaction is a quinone + NADH + 5 H(+)(in) = a quinol + NAD(+) + 4 H(+)(out). In terms of biological role, NDH-1 shuttles electrons from NADH, via FMN and iron-sulfur (Fe-S) centers, to quinones in the respiratory chain. The immediate electron acceptor for the enzyme in this species is believed to be a menaquinone. Couples the redox reaction to proton translocation (for every two electrons transferred, four hydrogen ions are translocated across the cytoplasmic membrane), and thus conserves the redox energy in a proton gradient. The polypeptide is NADH-quinone oxidoreductase subunit D (Mycolicibacterium gilvum (strain PYR-GCK) (Mycobacterium gilvum (strain PYR-GCK))).